Here is a 303-residue protein sequence, read N- to C-terminus: UDP-N-acetylenolpyruvoylglucosamine reductase (303 aa).

One can recognise an FAD-binding PCMH-type domain in the interval 27–207 (KVGGISQVFY…TSISQKLQKI (181 aa)). Arg175 is an active-site residue. Ser224 (proton donor) is an active-site residue. Glu294 is a catalytic residue.

This sequence belongs to the MurB family. FAD is required as a cofactor.

The protein resides in the cytoplasm. It catalyses the reaction UDP-N-acetyl-alpha-D-muramate + NADP(+) = UDP-N-acetyl-3-O-(1-carboxyvinyl)-alpha-D-glucosamine + NADPH + H(+). Its pathway is cell wall biogenesis; peptidoglycan biosynthesis. Functionally, cell wall formation. This is UDP-N-acetylenolpyruvoylglucosamine reductase from Orientia tsutsugamushi (strain Boryong) (Rickettsia tsutsugamushi).